A 1077-amino-acid chain; its full sequence is Bifunctional helicase and thymine dioxygenase JBP2 (1077 aa).

Residues 1-516 (MPMFMDGASQ…PPLCIPFKIA (516 aa)) form a thymine dioxygenase region. Fe cation-binding residues include His391, Asp393, and His441. Arg455 is a binding site for 2-oxoglutarate. Positions 517-1075 (KTLSLTQHAA…RNIDTVKSER (559 aa)) are DNA Helicase. Residues 531–706 (SRRIKEGDGC…YRLVGWVDDK (176 aa)) form the Helicase ATP-binding domain. 544–551 (LTMGLGKT) is an ATP binding site. Residues 657–660 (DEGH) carry the DEAH box motif. The region spanning 871–1032 (KLTALISILH…QVVPGHDLVD (162 aa)) is the Helicase C-terminal domain.

In the C-terminal section; belongs to the SNF2/RAD54 helicase family. The protein in the N-terminal section; belongs to the TET family. JBP2 subfamily. The cofactor is Fe(2+).

Its subcellular location is the nucleus. The catalysed reaction is ATP + H2O = ADP + phosphate + H(+). It carries out the reaction thymine + 2-oxoglutarate + O2 = 5-hydroxymethyluracil + succinate + CO2. Functionally, dioxygenase that catalyzes the first step of DNA base J (beta-d-glucosyl-HOMedU) biosynthesis by converting thymine to 5-hydroxymethyluracil (HOMedU). DNA base J is a hypermodified thymidine residue found in the genome of kinetoplastid parasites, which is localized primarily to repetitive DNA, namely the telomeres, and is implicated in the regulation of antigenic variation. Probably also acts as a DNA helicase. Recognizes and binds specific regions of the genome, hydrolyzes ATP and allows the DNA base J de novo synthesis. Involved in initial synthesis of DNA base J, JBP1 being able to act via the basal level of DNA base J and propagate further synthesis. In contrast to JBP1, it does not specifically bind DNA base J, however it binds chromatin. The chain is Bifunctional helicase and thymine dioxygenase JBP2 (JBP2) from Trypanosoma brucei brucei (strain 927/4 GUTat10.1).